Reading from the N-terminus, the 207-residue chain is Large ribosomal subunit protein uL4 (207 aa).

A disordered region spans residues 49–78 (HAVKNRSAVSGGGRKPWRQKGTGRARQGSI).

Belongs to the universal ribosomal protein uL4 family. In terms of assembly, part of the 50S ribosomal subunit.

Functionally, one of the primary rRNA binding proteins, this protein initially binds near the 5'-end of the 23S rRNA. It is important during the early stages of 50S assembly. It makes multiple contacts with different domains of the 23S rRNA in the assembled 50S subunit and ribosome. Its function is as follows. Forms part of the polypeptide exit tunnel. In Streptococcus equi subsp. zooepidemicus (strain MGCS10565), this protein is Large ribosomal subunit protein uL4.